The primary structure comprises 346 residues: Tetraacyldisaccharide 4'-kinase (346 aa).

62–69 (TAGGTGKT) is a binding site for ATP.

This sequence belongs to the LpxK family.

The catalysed reaction is a lipid A disaccharide + ATP = a lipid IVA + ADP + H(+). It functions in the pathway glycolipid biosynthesis; lipid IV(A) biosynthesis; lipid IV(A) from (3R)-3-hydroxytetradecanoyl-[acyl-carrier-protein] and UDP-N-acetyl-alpha-D-glucosamine: step 6/6. Transfers the gamma-phosphate of ATP to the 4'-position of a tetraacyldisaccharide 1-phosphate intermediate (termed DS-1-P) to form tetraacyldisaccharide 1,4'-bis-phosphate (lipid IVA). The chain is Tetraacyldisaccharide 4'-kinase from Xanthomonas oryzae pv. oryzae (strain MAFF 311018).